Here is a 217-residue protein sequence, read N- to C-terminus: uncharacterized protein (217 aa).

The 204-residue stretch at 14 to 217 (LAVNNLCIER…NELATEIISL (204 aa)) folds into the ABC transporter domain. 46–53 (GEIGSGKT) is an ATP binding site.

Belongs to the ABC transporter superfamily.

This is an uncharacterized protein from Haemophilus influenzae (strain ATCC 51907 / DSM 11121 / KW20 / Rd).